Reading from the N-terminus, the 397-residue chain is Chorismate synthase (397 aa).

Positions 40 and 46 each coordinate NADP(+). FMN is bound by residues Arg-129–Ser-131, Gln-257–Ala-258, Gly-302, Lys-317–Ser-321, and Arg-343.

The protein belongs to the chorismate synthase family. In terms of assembly, homotetramer. Requires FMNH2 as cofactor.

The catalysed reaction is 5-O-(1-carboxyvinyl)-3-phosphoshikimate = chorismate + phosphate. It functions in the pathway metabolic intermediate biosynthesis; chorismate biosynthesis; chorismate from D-erythrose 4-phosphate and phosphoenolpyruvate: step 7/7. In terms of biological role, catalyzes the anti-1,4-elimination of the C-3 phosphate and the C-6 proR hydrogen from 5-enolpyruvylshikimate-3-phosphate (EPSP) to yield chorismate, which is the branch point compound that serves as the starting substrate for the three terminal pathways of aromatic amino acid biosynthesis. This reaction introduces a second double bond into the aromatic ring system. In Chlorobium luteolum (strain DSM 273 / BCRC 81028 / 2530) (Pelodictyon luteolum), this protein is Chorismate synthase.